A 334-amino-acid chain; its full sequence is Phosphate acyltransferase (334 aa).

Belongs to the PlsX family. In terms of assembly, homodimer. Probably interacts with PlsY.

Its subcellular location is the cytoplasm. It catalyses the reaction a fatty acyl-[ACP] + phosphate = an acyl phosphate + holo-[ACP]. It functions in the pathway lipid metabolism; phospholipid metabolism. Functionally, catalyzes the reversible formation of acyl-phosphate (acyl-PO(4)) from acyl-[acyl-carrier-protein] (acyl-ACP). This enzyme utilizes acyl-ACP as fatty acyl donor, but not acyl-CoA. The chain is Phosphate acyltransferase from Caldicellulosiruptor saccharolyticus (strain ATCC 43494 / DSM 8903 / Tp8T 6331).